We begin with the raw amino-acid sequence, 628 residues long: Nuclear receptor subfamily 4 group A member 3 (628 aa).

The interval 1 to 112 (MPCVQAQYSP…HHHHHHHHHH (112 aa)) is activation function (AF)-1 domain. A required for DNA-PK heterotrimer region spans residues 1 to 140 (MPCVQAQYSP…PSTSMYFKQS (140 aa)). The interaction with NCOA1, NCOA2, NCOA3 and KAT2B stretch occupies residues 1 to 293 (MPCVQAQYSP…NRSSSSGEGT (293 aa)). 2 disordered regions span residues 96–163 (HGYH…DELP) and 269–290 (ASSL…SSSG). The segment covering 97 to 113 (GYHHHHHHHHHHHHHHQ) has biased composition (basic residues). A compositionally biased stretch (pro residues) spans 142–151 (PSTPTTPGFP). A compositionally biased stretch (low complexity) spans 270 to 289 (SSLLGESPSLPSPPNRSSSS). The nuclear receptor DNA-binding region spans 291–366 (EGTCAVCGDN…VGMVKEVVRT (76 aa)). 2 consecutive NR C4-type zinc fingers follow at residues 294-314 (CAVC…CEGC) and 330-354 (CLAN…FQKC). Residues 366–396 (TDSLKGRRGRLPSKPKSPLQQEPSQPSPPSP) form a disordered region. The span at 379-389 (KPKSPLQQEPS) shows a compositional bias: low complexity. Residues 381-628 (KSPLQQEPSQ…DKLFLDTLPF (248 aa)) form an interaction with KAT2B region. An NR LBD domain is found at 396 to 625 (PPICMMNALV…SVIDKLFLDT (230 aa)).

Belongs to the nuclear hormone receptor family. NR4 subfamily. Interacts with SIX3 (via homeobox); differentially regulates the transcriptional activities of NR4A3. Interacts with NR3C1 (via nuclear receptor DNA-binding domain); the interactions represses transcription activity of NR4A3 on the POMC promoter Nur response element (NurRE). Interacts with TRIM28; the interactions potentiates NR4A3 activity on NurRE promoter. Binds DNA as a monomer and homodimer. Interacts with PARP1; activates PARP1 by improving acetylation of PARP1 and suppressing the interaction between PARP1 and SIRT1. Interacts with the constituents of DNA-PK heterotrimer PRKDC, XRCC6 and XRCC5; phosphorylates and prevents NR4A3 ubiquitinylation and degradation. Interacts with NCOA2; potentiates the activity of the NR4A3. Interacts with NCOA1, NCOA3, MED1 and KAT2B. Interacts with EP300 and NCOA2; mediates the recruitment of MED1 in the coactivator complex. In terms of processing, phosphorylated by PRKDC. Expressed at high levels in cultured apoptotic neuronal cells and fetal brain, and at low level in adult brain.

It localises to the nucleus. Functionally, transcriptional activator that binds to regulatory elements in promoter regions in a cell- and response element (target)-specific manner. Induces gene expression by binding as monomers to the NR4A1 response element (NBRE) 5'-AAAAGGTCA-3' site and as homodimers to the Nur response element (NurRE) site in the promoter of their regulated target genes. Plays a role in the regulation of proliferation, survival and differentiation of many different cell types and also in metabolism and inflammation. Mediates proliferation of vascular smooth muscle, myeloid progenitor cell and type B pancreatic cells; promotes mitogen-induced vascular smooth muscle cell proliferation through transactivation of SKP2 promoter by binding a NBRE site. Upon PDGF stimulation, stimulates vascular smooth muscle cell proliferation by regulating CCND1 and CCND2 expression. In islets, induces type B pancreatic cell proliferation through up-regulation of genes that activate cell cycle, as well as genes that cause degradation of the CDKN1A. Negatively regulates myeloid progenitor cell proliferation by repressing RUNX1 in a NBRE site-independent manner. During inner ear, plays a role as a key mediator of the proliferative growth phase of semicircular canal development. Also mediates survival of neuron and smooth muscle cells; mediates CREB-induced neuronal survival, and during hippocampus development, plays a critical role in pyramidal cell survival and axonal guidance. Is required for S phase entry of the cell cycle and survival of smooth muscle cells by inducing CCND1, resulting in RB1 phosphorylation. Binds to NBRE motif in CCND1 promoter, resulting in the activation of the promoter and CCND1 transcription. Also plays a role in inflammation; Upon TNF stimulation, mediates monocyte adhesion by inducing the expression of VCAM1 and ICAM1 by binding to the NBRE consensus site. In mast cells activated by Fc-epsilon receptor cross-linking, promotes the synthesis and release of cytokines but impairs events leading to degranulation. Also plays a role in metabolism; by modulating feeding behavior; and by playing a role in energy balance by inhibiting the glucocorticoid-induced orexigenic neuropeptides AGRP expression, at least in part by forming a complex with activated NR3C1 on the AGRP-glucocorticoid response element (GRE), and thus weakening the DNA binding activity of NR3C1. Upon catecholamines stimulation, regulates gene expression that controls oxidative metabolism in skeletal muscle. Plays a role in glucose transport by regulating translocation of the SLC2A4 glucose transporter to the cell surface. Finally, during gastrulation plays a crucial role in the formation of anterior mesoderm by controlling cell migration. Also participates in cardiac hypertrophy by activating PARP1. This is Nuclear receptor subfamily 4 group A member 3 (Nr4a3) from Rattus norvegicus (Rat).